The sequence spans 444 residues: Structure-specific endonuclease subunit SLX1 (444 aa).

The 83-residue stretch at 23-105 folds into the GIY-YIG domain; sequence AFYCCYLLRS…QNTKVSRHAD (83 aa). The SLX1-type zinc finger occupies 240–295; sequence CGVCKQRLILQHDIIAVCSHSSCHCAAHLSCLSSHFLKDKDSDSELIPREGTCPAC. Disordered stretches follow at residues 323–355 and 386–444; these read RRRRQAGTPKGQGLKSVRGRGRGHSEDESDALQ and AHRP…EVIE.

It belongs to the SLX1 family. In terms of assembly, forms a heterodimer with SLX4. A divalent metal cation serves as cofactor.

The protein localises to the nucleus. Its function is as follows. Catalytic subunit of the SLX1-SLX4 structure-specific endonuclease that resolves DNA secondary structures generated during DNA repair and recombination. Has endonuclease activity towards branched DNA substrates, introducing single-strand cuts in duplex DNA close to junctions with ss-DNA. The protein is Structure-specific endonuclease subunit SLX1 of Paracoccidioides brasiliensis (strain Pb18).